A 335-amino-acid polypeptide reads, in one-letter code: Mitochondrial amidoxime reducing component 2 (335 aa).

Residues 1-35 (MGASSSSALARLGLPARPWPRWLGVAALGLAAVAL) constitute a mitochondrion transit peptide. Residues K59, K138, and K144 each participate in a glycyl lysine isopeptide (Lys-Gly) (interchain with G-Cter in ubiquitin) cross-link. K156 is modified (N6-acetyllysine; alternate). Residue K156 forms a Glycyl lysine isopeptide (Lys-Gly) (interchain with G-Cter in ubiquitin); alternate linkage. Residues K166, K173, K187, K287, and K294 each participate in a glycyl lysine isopeptide (Lys-Gly) (interchain with G-Cter in ubiquitin) cross-link. In terms of domain architecture, MOSC spans 188 to 334 (GRTSRKLLPT…LRVGDPVYRM (147 aa)).

As to quaternary structure, component of a complex composed of cytochrome b5, NADH-cytochrome b5 reductase (CYB5R3) and MTARC2. It depends on Mo-molybdopterin as a cofactor. In terms of processing, ubiquitinated by PRKN during mitophagy, leading to its degradation and enhancement of mitophagy. Deubiquitinated by USP30.

The protein localises to the mitochondrion outer membrane. Its subcellular location is the peroxisome. It carries out the reaction N(omega)-hydroxy-L-arginine + 2 Fe(II)-[cytochrome b5] + 2 H(+) = L-arginine + 2 Fe(III)-[cytochrome b5] + H2O. Functionally, catalyzes the reduction of N-oxygenated molecules, acting as a counterpart of cytochrome P450 and flavin-containing monooxygenases in metabolic cycles. As a component of prodrug-converting system, reduces a multitude of N-hydroxylated prodrugs particularly amidoximes, leading to increased drug bioavailability. May be involved in mitochondrial N(omega)-hydroxy-L-arginine (NOHA) reduction, regulating endogenous nitric oxide levels and biosynthesis. Postulated to cleave the N-OH bond of N-hydroxylated substrates in concert with electron transfer from NADH to cytochrome b5 reductase then to cytochrome b5, the ultimate electron donor that primes the active site for substrate reduction. The chain is Mitochondrial amidoxime reducing component 2 from Homo sapiens (Human).